The following is a 455-amino-acid chain: Zinc finger SWIM domain-containing protein 1 (455 aa).

Residues 264–288 are disordered; it reads ASLSLAETPQDSHTPSEASAENPNT. The segment at 333-375 adopts an SWIM-type zinc-finger fold; it reads MSIQILEDTHTVQPQPPASCSCYFNQAFHLPCRHILAMLSARQ.

The protein is Zinc finger SWIM domain-containing protein 1 (Zswim1) of Mus musculus (Mouse).